Consider the following 483-residue polypeptide: Protein P55 (483 aa).

A helical membrane pass occupies residues leucine 342–glycine 359.

It localises to the host membrane. This Vitis vinifera (Grape) protein is Protein P55.